Consider the following 642-residue polypeptide: Threonine--tRNA ligase (642 aa).

Residues 1 to 61 (MPVITLPDGS…DTDAQLAIIT (61 aa)) form the TGS domain. The catalytic stretch occupies residues 243-534 (DHRKIGKQLD…LTEEFAGFFP (292 aa)). Residues Cys334, His385, and His511 each contribute to the Zn(2+) site.

This sequence belongs to the class-II aminoacyl-tRNA synthetase family. As to quaternary structure, homodimer. It depends on Zn(2+) as a cofactor.

Its subcellular location is the cytoplasm. It carries out the reaction tRNA(Thr) + L-threonine + ATP = L-threonyl-tRNA(Thr) + AMP + diphosphate + H(+). Its function is as follows. Catalyzes the attachment of threonine to tRNA(Thr) in a two-step reaction: L-threonine is first activated by ATP to form Thr-AMP and then transferred to the acceptor end of tRNA(Thr). Also edits incorrectly charged L-seryl-tRNA(Thr). The protein is Threonine--tRNA ligase of Pectobacterium atrosepticum (strain SCRI 1043 / ATCC BAA-672) (Erwinia carotovora subsp. atroseptica).